A 189-amino-acid chain; its full sequence is Large ribosomal subunit protein uL10 (189 aa).

The protein belongs to the universal ribosomal protein uL10 family. In terms of assembly, part of the ribosomal stalk of the 50S ribosomal subunit. The N-terminus interacts with L11 and the large rRNA to form the base of the stalk. The C-terminus forms an elongated spine to which L12 dimers bind in a sequential fashion forming a multimeric L10(L12)X complex.

Its function is as follows. Forms part of the ribosomal stalk, playing a central role in the interaction of the ribosome with GTP-bound translation factors. This Rippkaea orientalis (strain PCC 8801 / RF-1) (Cyanothece sp. (strain PCC 8801)) protein is Large ribosomal subunit protein uL10.